Consider the following 134-residue polypeptide: uncharacterized protein (134 aa).

A run of 2 helical transmembrane segments spans residues 16 to 36 (IFSF…NTKL) and 43 to 63 (IAYF…IHGT).

This sequence belongs to the plectrovirus ORF5 family.

It localises to the host membrane. This is an uncharacterized protein from Spiroplasma citri (SpV1).